A 957-amino-acid chain; its full sequence is Glycine dehydrogenase (decarboxylating) (957 aa).

Lysine 708 carries the N6-(pyridoxal phosphate)lysine modification.

Belongs to the GcvP family. The glycine cleavage system is composed of four proteins: P, T, L and H. It depends on pyridoxal 5'-phosphate as a cofactor.

It catalyses the reaction N(6)-[(R)-lipoyl]-L-lysyl-[glycine-cleavage complex H protein] + glycine + H(+) = N(6)-[(R)-S(8)-aminomethyldihydrolipoyl]-L-lysyl-[glycine-cleavage complex H protein] + CO2. In terms of biological role, the glycine cleavage system catalyzes the degradation of glycine. The P protein binds the alpha-amino group of glycine through its pyridoxal phosphate cofactor; CO(2) is released and the remaining methylamine moiety is then transferred to the lipoamide cofactor of the H protein. The protein is Glycine dehydrogenase (decarboxylating) of Escherichia coli O1:K1 / APEC.